The primary structure comprises 129 residues: Putative membrane protein insertion efficiency factor (129 aa).

This sequence belongs to the UPF0161 family.

The protein resides in the cell inner membrane. In terms of biological role, could be involved in insertion of integral membrane proteins into the membrane. The protein is Putative membrane protein insertion efficiency factor of Rhodopseudomonas palustris (strain TIE-1).